Consider the following 265-residue polypeptide: Hydroxyacylglutathione hydrolase (265 aa).

7 residues coordinate Zn(2+): His-53, His-55, Asp-57, His-58, His-109, Asp-126, and His-164.

It belongs to the metallo-beta-lactamase superfamily. Glyoxalase II family. As to quaternary structure, monomer. Zn(2+) serves as cofactor.

The catalysed reaction is an S-(2-hydroxyacyl)glutathione + H2O = a 2-hydroxy carboxylate + glutathione + H(+). The protein operates within secondary metabolite metabolism; methylglyoxal degradation; (R)-lactate from methylglyoxal: step 2/2. Thiolesterase that catalyzes the hydrolysis of S-D-lactoyl-glutathione to form glutathione and D-lactic acid. The polypeptide is Hydroxyacylglutathione hydrolase (Dechloromonas aromatica (strain RCB)).